A 366-amino-acid chain; its full sequence is Peroxisomal (S)-2-hydroxy-acid oxidase GLO4 (366 aa).

The FMN hydroxy acid dehydrogenase domain maps to 1–360 (MEDNLPVNVR…TRSHVMTEGD (360 aa)). Tyr-27 serves as a coordination point for a 2-oxocarboxylate. Residues 80–82 (PTG), Ser-109, 130–132 (QLY), and Thr-158 contribute to the FMN site. Tyr-132 contributes to the a 2-oxocarboxylate binding site. Arg-167 is an a 2-oxocarboxylate binding site. 2 residues coordinate FMN: Lys-231 and Ser-253. Residue His-255 is the Proton acceptor of the active site. Arg-258 contributes to the a 2-oxocarboxylate binding site. FMN-binding positions include 286–290 (DGGIR) and 309–310 (XX). The Microbody targeting signal motif lies at 364–366 (SLL).

The protein belongs to the FMN-dependent alpha-hydroxy acid dehydrogenase family. In terms of assembly, homotetramer. FMN is required as a cofactor.

It is found in the peroxisome. The enzyme catalyses a (2S)-2-hydroxycarboxylate + O2 = a 2-oxocarboxylate + H2O2. The protein operates within lipid metabolism; fatty acid metabolism. Functionally, oxidase that catalyzes the oxidation of a broad range of 2-hydroxyacids to the corresponding 2-oxoacids, with a reduction of O2 to H2O2. May be involved in a general medium- and long-chain fatty acid catabolic pathway such as alpha-oxidation. This Oryza sativa subsp. indica (Rice) protein is Peroxisomal (S)-2-hydroxy-acid oxidase GLO4 (GLO4).